Consider the following 132-residue polypeptide: Tyrosine phosphatase-like protein N2 (132 aa).

The region spanning 1 to 132 (MQGPMKNTVA…DILGRFQRVF (132 aa)) is the Tyrosine-protein phosphatase domain.

This sequence belongs to the protein-tyrosine phosphatase family.

The protein is Tyrosine phosphatase-like protein N2 (N4) of Microplitis demolitor (Parasitoid wasp).